Here is a 36-residue protein sequence, read N- to C-terminus: Pancreatic polypeptide (36 aa).

Phe36 carries the phenylalanine amide modification.

The protein belongs to the NPY family.

The protein resides in the secreted. In terms of biological role, hormone secreted by pancreatic cells that acts as a regulator of pancreatic and gastrointestinal functions. The polypeptide is Pancreatic polypeptide (ppy) (Alligator mississippiensis (American alligator)).